The following is a 407-amino-acid chain: Na(+)-translocating NADH-quinone reductase subunit F (407 aa).

The chain crosses the membrane as a helical span at residues 3–23 (IILGVVMFTLIVLALTVMILF). In terms of domain architecture, 2Fe-2S ferredoxin-type spans 32–126 (GDITVEINED…NLKIELPEEI (95 aa)). Residues cysteine 69, cysteine 75, cysteine 78, and cysteine 110 each coordinate [2Fe-2S] cluster. An FAD-binding FR-type domain is found at 129 to 269 (VKKWTCEVIS…SGPFGEFFAK (141 aa)).

Belongs to the NqrF family. In terms of assembly, composed of six subunits; NqrA, NqrB, NqrC, NqrD, NqrE and NqrF. It depends on [2Fe-2S] cluster as a cofactor. Requires FAD as cofactor.

The protein localises to the cell inner membrane. It catalyses the reaction a ubiquinone + n Na(+)(in) + NADH + H(+) = a ubiquinol + n Na(+)(out) + NAD(+). Its function is as follows. NQR complex catalyzes the reduction of ubiquinone-1 to ubiquinol by two successive reactions, coupled with the transport of Na(+) ions from the cytoplasm to the periplasm. The first step is catalyzed by NqrF, which accepts electrons from NADH and reduces ubiquinone-1 to ubisemiquinone by a one-electron transfer pathway. In Yersinia pseudotuberculosis serotype I (strain IP32953), this protein is Na(+)-translocating NADH-quinone reductase subunit F.